The primary structure comprises 125 residues: Gem-associated protein 7 (125 aa).

Residue M1 is modified to N-acetylmethionine. Residues 1-29 form the SUZ-C domain; that stretch reads MQTPLATPVPVLRLPRGPDGSNRGFAPDG. The tract at residues 1–52 is disordered; sequence MQTPLATPVPVLRLPRGPDGSNRGFAPDGRRAPPKPEVPEPPESRESWEQQA. T3 is subject to Phosphothreonine. Residues 59–125 form the Sm domain; sequence RYLRSLLAMV…SDIISYTFKP (67 aa).

Belongs to the gemin-7 family. Part of the core SMN complex that contains SMN1, GEMIN2/SIP1, DDX20/GEMIN3, GEMIN4, GEMIN5, GEMIN6, GEMIN7, GEMIN8 and STRAP/UNRIP. Part of the SMN-Sm complex that contains SMN1, GEMIN2/SIP1, DDX20/GEMIN3, GEMIN4, GEMIN5, GEMIN6, GEMIN7, GEMIN8, STRAP/UNRIP and the Sm proteins SNRPB, SNRPD1, SNRPD2, SNRPD3, SNRPE, SNRPF and SNRPG. Interacts with GEMIN6; the interaction is direct. Interacts with STRAP/UNRIP; the interaction is direct. Interacts with GEMIN8; the interaction is direct. Interacts with SNRPB, SNRPD2, SNRPD3 and SNRPE; the interaction is direct.

It localises to the nucleus. The protein localises to the nucleoplasm. It is found in the gem. The protein resides in the cytoplasm. Its function is as follows. The SMN complex catalyzes the assembly of small nuclear ribonucleoproteins (snRNPs), the building blocks of the spliceosome, and thereby plays an important role in the splicing of cellular pre-mRNAs. Most spliceosomal snRNPs contain a common set of Sm proteins SNRPB, SNRPD1, SNRPD2, SNRPD3, SNRPE, SNRPF and SNRPG that assemble in a heptameric protein ring on the Sm site of the small nuclear RNA to form the core snRNP (Sm core). In the cytosol, the Sm proteins SNRPD1, SNRPD2, SNRPE, SNRPF and SNRPG are trapped in an inactive 6S pICln-Sm complex by the chaperone CLNS1A that controls the assembly of the core snRNP. To assemble core snRNPs, the SMN complex accepts the trapped 5Sm proteins from CLNS1A forming an intermediate. Binding of snRNA inside 5Sm triggers eviction of the SMN complex, thereby allowing binding of SNRPD3 and SNRPB to complete assembly of the core snRNP. The polypeptide is Gem-associated protein 7 (GEMIN7) (Bos taurus (Bovine)).